The primary structure comprises 149 residues: Large ribosomal subunit protein uL16 (149 aa).

This sequence belongs to the universal ribosomal protein uL16 family. In terms of assembly, part of the 50S ribosomal subunit.

Functionally, binds 23S rRNA and is also seen to make contacts with the A and possibly P site tRNAs. The protein is Large ribosomal subunit protein uL16 of Dehalococcoides mccartyi (strain ATCC BAA-2100 / JCM 16839 / KCTC 5957 / BAV1).